The sequence spans 207 residues: Uridine kinase (207 aa).

14-21 (GGSGSGKT) is an ATP binding site.

The protein belongs to the uridine kinase family.

It is found in the cytoplasm. It catalyses the reaction uridine + ATP = UMP + ADP + H(+). The enzyme catalyses cytidine + ATP = CMP + ADP + H(+). It functions in the pathway pyrimidine metabolism; CTP biosynthesis via salvage pathway; CTP from cytidine: step 1/3. Its pathway is pyrimidine metabolism; UMP biosynthesis via salvage pathway; UMP from uridine: step 1/1. The protein is Uridine kinase of Deinococcus deserti (strain DSM 17065 / CIP 109153 / LMG 22923 / VCD115).